A 321-amino-acid chain; its full sequence is MNLKVGVLMDPIANIAIHKDTTFAMLLALQARQHEVYYLEPADIFLRNEKILGSMRRLQVADDPSQWFNLSESEIKPLHALDVLLMRKDPPFNMSYVYLTYLLELAEKQGLFVVNKPASLRDANEKLFTGWFPHCTPKTLVTSRKAILQEFIREQKEVVIKPLGAMAGESIFYLTVNDPNIPVVIETMTANGHQLVMAQRFIPEVKSGDKRIILIDGEPIPYTLARIPPKGDFRGNLARGAKGEGRELTDRDRWICEQVGPTLRKKGLWFVGLDIIGDYLTEINVTSPTGVRELQAQFDVDIAGQFIAFLETKYATTTDIE.

An ATP-grasp domain is found at 125-311 (EKLFTGWFPH…IAGQFIAFLE (187 aa)). 151–208 (FIREQKEVVIKPLGAMAGESIFYLTVNDPNIPVVIETMTANGHQLVMAQRFIPEVKSG) is a binding site for ATP. Residues Glu-282 and Asn-284 each coordinate Mg(2+).

Belongs to the prokaryotic GSH synthase family. Mg(2+) is required as a cofactor. It depends on Mn(2+) as a cofactor.

The catalysed reaction is gamma-L-glutamyl-L-cysteine + glycine + ATP = glutathione + ADP + phosphate + H(+). It participates in sulfur metabolism; glutathione biosynthesis; glutathione from L-cysteine and L-glutamate: step 2/2. This chain is Glutathione synthetase, found in Coxiella burnetii (strain RSA 493 / Nine Mile phase I).